The sequence spans 602 residues: Putative pentatricopeptide repeat-containing protein At1g12700, mitochondrial (602 aa).

Residues 1–95 (MMIKRSITTN…PSLVDFSRFF (95 aa)) constitute a mitochondrion transit peptide. PPR repeat units follow at residues 87-121 (SLVDFSRFFSAIARTKQFNLVLDFCKQLELNGIAH), 122-156 (NIYTLNIMINCFCRCCKTCFAYSVLGKVMKLGYEP), 157-191 (DTTTFNTLIKGLFLEGKVSEAVVLVDRMVENGCQP), 192-226 (DVVTYNSIVNGICRSGDTSLALDLLRKMEERNVKA), 227-261 (DVFTYSTIIDSLCRDGCIDAAISLFKEMETKGIKS), 262-296 (SVVTYNSLVRGLCKAGKWNDGALLLKDMVSREIVP), 297-331 (NVITFNVLLDVFVKEGKLQEANELYKEMITRGISP), 332-366 (NIITYNTLMDGYCMQNRLSEANNMLDLMVRNKCSP), 367-401 (DIVTFTSLIKGYCMVKRVDDGMKVFRNISKRGLVA), 402-436 (NAVTYSILVQGFCQSGKIKLAEELFQEMVSHGVLP), 437-471 (DVMTYGILLDGLCDNGKLEKALEIFEDLQKSKMDL), 472-506 (GIVMYTTIIEGMCKGGKVEDAWNLFCSLPCKGVKP), 507-541 (NVMTYTVMISGLCKKGSLSEANILLRKMEEDGNAP), and 542-576 (NDCTYNTLIRAHLRDGDLTASAKLIEEMKSCGFSA).

The protein belongs to the PPR family. P subfamily.

Its subcellular location is the mitochondrion. This is Putative pentatricopeptide repeat-containing protein At1g12700, mitochondrial from Arabidopsis thaliana (Mouse-ear cress).